The primary structure comprises 75 residues: MLIPHDQLESDTLTRLIEDFVTRDGTDNGDETPLDTRVARVRRALDRGEAVIVFDADSQQCQLALKRDVPREWLD.

The protein belongs to the UPF0270 family.

This Stutzerimonas stutzeri (strain A1501) (Pseudomonas stutzeri) protein is UPF0270 protein PST_1436.